Consider the following 253-residue polypeptide: Alpha-acetolactate decarboxylase (253 aa).

The protein belongs to the alpha-acetolactate decarboxylase family.

The catalysed reaction is (2S)-2-acetolactate + H(+) = (R)-acetoin + CO2. Its pathway is polyol metabolism; (R,R)-butane-2,3-diol biosynthesis; (R,R)-butane-2,3-diol from pyruvate: step 2/3. Its function is as follows. Converts acetolactate into acetoin. This chain is Alpha-acetolactate decarboxylase (alsD), found in Bacillus licheniformis (strain ATCC 14580 / DSM 13 / JCM 2505 / CCUG 7422 / NBRC 12200 / NCIMB 9375 / NCTC 10341 / NRRL NRS-1264 / Gibson 46).